A 1867-amino-acid polypeptide reads, in one-letter code: Probable serine/threonine-protein kinase roco8 (1867 aa).

The DEP 1 domain maps to 16–93 (SSDGLQIKDR…DDYIFYQFDN (78 aa)). 2 disordered regions span residues 96–115 (NNNNINNNNNNATSTATTAT) and 121–225 (VSTK…NSFN). Low complexity predominate over residues 121-223 (VSTKIGSIGK…NSNSTYNSNS (103 aa)). The DEP 2 domain maps to 264-342 (GDKGLKLQKK…NNNNGGGGVM (79 aa)). LRR repeat units follow at residues 491 to 512 (RLDDLCLTHKCISIIPTTIINT), 515 to 536 (FLRIIDLSFNQLSESNQLESIA), 540 to 561 (NLESCNLSHNQLSTLPSSFSRL), 563 to 584 (LLTKLILSHNCFQVIPNVVFQL), 586 to 607 (NLEELSLAANQLSSISESIGSL), 609 to 631 (SLEKLDLSFNKQINKIPKELGLL), 633 to 656 (RLKSLNVLGSNKINELPSFLSTLP), and 657 to 678 (LLEQLDFSRDIIKSPPKEITSK). Residues 693-941 (GTETLSHIKL…NEIIQTLLNQ (249 aa)) enclose the Roc domain. Disordered regions lie at residues 763 to 813 (QNGI…KKRP) and 942 to 961 (SNNNNNNNNNNNYNNNKQSN). A compositionally biased stretch (low complexity) spans 768 to 793 (TSSSNLNLSTGTLPPPTQLSSSTSEL). In terms of domain architecture, COR spans 974–1111 (PSIYITLETN…ILYTLKNNSN (138 aa)). Residues 1163-1207 (SPSLSLSNSSQSVFTNPNNNNNNKSEQQQQQQQQQQQPQPISTSP) form a disordered region. The region spanning 1456–1864 (LIYQEEIGVG…TLNEIKDSTI (409 aa)) is the Protein kinase domain. ATP contacts are provided by residues 1462–1470 (IGVGGFSRV) and lysine 1483. A disordered region spans residues 1509-1546 (SNSSLSISLSSSTSSLSPPIVNNNNNNNNLNNNLNNLN). Catalysis depends on aspartate 1721, which acts as the Proton acceptor.

The protein belongs to the protein kinase superfamily. TKL Ser/Thr protein kinase family. ROCO subfamily.

The enzyme catalyses L-seryl-[protein] + ATP = O-phospho-L-seryl-[protein] + ADP + H(+). The catalysed reaction is L-threonyl-[protein] + ATP = O-phospho-L-threonyl-[protein] + ADP + H(+). The chain is Probable serine/threonine-protein kinase roco8 (roco8) from Dictyostelium discoideum (Social amoeba).